The primary structure comprises 86 residues: NADH-ubiquinone oxidoreductase chain 4L (86 aa).

2 consecutive transmembrane segments (helical) span residues 22-42 and 52-72; these read LLVTLLSFEFLILLLFSLLVY and FIFLSVTVCEGALGLSVLVSL.

It belongs to the complex I subunit 4L family.

The protein localises to the mitochondrion membrane. It catalyses the reaction a ubiquinone + NADH + 5 H(+)(in) = a ubiquinol + NAD(+) + 4 H(+)(out). Its function is as follows. Core subunit of the mitochondrial membrane respiratory chain NADH dehydrogenase (Complex I) that is believed to belong to the minimal assembly required for catalysis. Complex I functions in the transfer of electrons from NADH to the respiratory chain. The immediate electron acceptor for the enzyme is believed to be ubiquinone. This chain is NADH-ubiquinone oxidoreductase chain 4L (ND4L), found in Artemia salina (Brine shrimp).